Here is a 140-residue protein sequence, read N- to C-terminus: Lysozyme D (140 aa).

The first 18 residues, 1 to 18, serve as a signal peptide directing secretion; it reads MKAFIVLVALACAAPAFG. The C-type lysozyme domain maps to 19 to 140; it reads RTMDRCSLAR…GWLPSIDDCF (122 aa). Intrachain disulfides connect Cys24–Cys139, Cys45–Cys129, Cys80–Cys96, and Cys92–Cys110. Catalysis depends on residues Glu50 and Asp68.

The protein belongs to the glycosyl hydrolase 22 family. Found in the midgut.

It catalyses the reaction Hydrolysis of (1-&gt;4)-beta-linkages between N-acetylmuramic acid and N-acetyl-D-glucosamine residues in a peptidoglycan and between N-acetyl-D-glucosamine residues in chitodextrins.. Functionally, unlikely to play an active role in the humoral immune defense. May have a function in the digestion of bacteria in the food. In Drosophila melanogaster (Fruit fly), this protein is Lysozyme D (LysD).